Reading from the N-terminus, the 444-residue chain is 3-isopropylmalate dehydratase large subunit (444 aa).

The [4Fe-4S] cluster site is built by cysteine 348, cysteine 408, and cysteine 411.

Belongs to the aconitase/IPM isomerase family. LeuC type 1 subfamily. As to quaternary structure, heterodimer of LeuC and LeuD. Requires [4Fe-4S] cluster as cofactor.

It catalyses the reaction (2R,3S)-3-isopropylmalate = (2S)-2-isopropylmalate. Its pathway is amino-acid biosynthesis; L-leucine biosynthesis; L-leucine from 3-methyl-2-oxobutanoate: step 2/4. Catalyzes the isomerization between 2-isopropylmalate and 3-isopropylmalate, via the formation of 2-isopropylmaleate. The polypeptide is 3-isopropylmalate dehydratase large subunit (Buchnera aphidicola subsp. Uroleucon ambrosiae).